Reading from the N-terminus, the 297-residue chain is Acetylglutamate kinase (297 aa).

Residues 68–69 (GG), Arg-90, and Asn-189 contribute to the substrate site.

This sequence belongs to the acetylglutamate kinase family. ArgB subfamily.

It is found in the cytoplasm. It catalyses the reaction N-acetyl-L-glutamate + ATP = N-acetyl-L-glutamyl 5-phosphate + ADP. It participates in amino-acid biosynthesis; L-arginine biosynthesis; N(2)-acetyl-L-ornithine from L-glutamate: step 2/4. Catalyzes the ATP-dependent phosphorylation of N-acetyl-L-glutamate. In Akkermansia muciniphila (strain ATCC BAA-835 / DSM 22959 / JCM 33894 / BCRC 81048 / CCUG 64013 / CIP 107961 / Muc), this protein is Acetylglutamate kinase.